Consider the following 133-residue polypeptide: uncharacterized protein (133 aa).

The signal sequence occupies residues 1-22 (MYRSSISIQVFICVLFLPLDSG). Asn111 carries N-linked (GlcNAc...) asparagine glycosylation.

The protein localises to the secreted. This is an uncharacterized protein from Saccharomyces cerevisiae (strain ATCC 204508 / S288c) (Baker's yeast).